A 229-amino-acid polypeptide reads, in one-letter code: DNA mismatch repair protein MutH (229 aa).

Belongs to the MutH family.

It is found in the cytoplasm. Sequence-specific endonuclease that cleaves unmethylated GATC sequences. It is involved in DNA mismatch repair. This chain is DNA mismatch repair protein MutH, found in Escherichia coli O127:H6 (strain E2348/69 / EPEC).